Reading from the N-terminus, the 37-residue chain is Large ribosomal subunit protein bL36 (37 aa).

This sequence belongs to the bacterial ribosomal protein bL36 family.

The chain is Large ribosomal subunit protein bL36 from Clostridium perfringens (strain ATCC 13124 / DSM 756 / JCM 1290 / NCIMB 6125 / NCTC 8237 / Type A).